Reading from the N-terminus, the 543-residue chain is Serendipity locus protein alpha (543 aa).

It is found in the cytoplasm. Its subcellular location is the cell membrane. Its function is as follows. Required for the cellularization of the syncytial blastoderm embryo. Involved in the localization of the actin filaments just prior to and during plasma membrane invagination. Sry-alpha together with nullo and bnk may provide auxiliary functions, by acting both to stabilize a large and dynamic microfilament structure and regulate its functions. The chain is Serendipity locus protein alpha (Sry-alpha) from Drosophila subobscura (Fruit fly).